A 909-amino-acid chain; its full sequence is Protein translocase subunit SecA (909 aa).

ATP is bound by residues Gln87 and 105–109 (GEGKT). A disordered region spans residues 246-265 (LEQQEKEDEEGKNGDGDYTI). Basic and acidic residues predominate over residues 254–265 (EEGKNGDGDYTI). Asp512 serves as a coordination point for ATP. Over residues 834 to 858 (ESDVEAVEEQRRQADEQPKQYEHET) the composition is skewed to basic and acidic residues. A disordered region spans residues 834 to 899 (ESDVEAVEEQ…NDPCPCGSGL (66 aa)). Positions 859-875 (ASATQAPEQAPEAAPAA) are enriched in low complexity. Zn(2+)-binding residues include Cys893, Cys895, Cys904, and His905.

This sequence belongs to the SecA family. As to quaternary structure, monomer and homodimer. Part of the essential Sec protein translocation apparatus which comprises SecA, SecYEG and auxiliary proteins SecDF-YajC and YidC. It depends on Zn(2+) as a cofactor.

The protein localises to the cell inner membrane. The protein resides in the cytoplasm. It carries out the reaction ATP + H2O + cellular proteinSide 1 = ADP + phosphate + cellular proteinSide 2.. Part of the Sec protein translocase complex. Interacts with the SecYEG preprotein conducting channel. Has a central role in coupling the hydrolysis of ATP to the transfer of proteins into and across the cell membrane, serving both as a receptor for the preprotein-SecB complex and as an ATP-driven molecular motor driving the stepwise translocation of polypeptide chains across the membrane. In Pseudoalteromonas atlantica (strain T6c / ATCC BAA-1087), this protein is Protein translocase subunit SecA.